Consider the following 436-residue polypeptide: Xaa-Arg dipeptidase (436 aa).

This sequence belongs to the peptidase M20A family.

It carries out the reaction beta-alanyl-L-lysine + H2O = beta-alanine + L-lysine. The enzyme catalyses beta-alanyl-L-ornithine + H2O = beta-alanine + L-ornithine. It catalyses the reaction N(2)-(4-aminobutanoyl)-L-lysine + H2O = 4-aminobutanoate + L-lysine. The catalysed reaction is N(2)-(4-aminobutanoyl)-L-ornithine + H2O = 4-aminobutanoate + L-ornithine. It carries out the reaction N(2)-(4-aminobutanoyl)-L-arginine + H2O = 4-aminobutanoate + L-arginine. In terms of biological role, catalyzes the peptide bond hydrolysis in dipeptides having basic amino acids lysine, ornithine or arginine at C-terminus. Postulated to function in a metabolite repair mechanism by eliminating alternate dipeptide by-products formed during carnosine synthesis. This Homo sapiens (Human) protein is Xaa-Arg dipeptidase.